Consider the following 324-residue polypeptide: tRNA U34 carboxymethyltransferase (324 aa).

Residues Lys91, Trp105, Lys110, Gly130, 152–154, 181–182, Met196, Tyr200, and Arg315 each bind carboxy-S-adenosyl-L-methionine; these read DPS and IE.

The protein belongs to the class I-like SAM-binding methyltransferase superfamily. CmoB family. As to quaternary structure, homotetramer.

The enzyme catalyses carboxy-S-adenosyl-L-methionine + 5-hydroxyuridine(34) in tRNA = 5-carboxymethoxyuridine(34) in tRNA + S-adenosyl-L-homocysteine + H(+). Its function is as follows. Catalyzes carboxymethyl transfer from carboxy-S-adenosyl-L-methionine (Cx-SAM) to 5-hydroxyuridine (ho5U) to form 5-carboxymethoxyuridine (cmo5U) at position 34 in tRNAs. The chain is tRNA U34 carboxymethyltransferase from Photobacterium profundum (strain SS9).